Reading from the N-terminus, the 362-residue chain is 3-dehydroquinate synthase (362 aa).

Residues 71–76 (DGEQYK), 105–109 (GVVGD), 129–130 (TT), K142, K151, and 169–172 (CLKT) contribute to the NAD(+) site. Residues E184, H247, and H264 each contribute to the Zn(2+) site.

The protein belongs to the sugar phosphate cyclases superfamily. Dehydroquinate synthase family. It depends on Co(2+) as a cofactor. Zn(2+) is required as a cofactor. NAD(+) serves as cofactor.

Its subcellular location is the cytoplasm. It catalyses the reaction 7-phospho-2-dehydro-3-deoxy-D-arabino-heptonate = 3-dehydroquinate + phosphate. It participates in metabolic intermediate biosynthesis; chorismate biosynthesis; chorismate from D-erythrose 4-phosphate and phosphoenolpyruvate: step 2/7. Catalyzes the conversion of 3-deoxy-D-arabino-heptulosonate 7-phosphate (DAHP) to dehydroquinate (DHQ). This chain is 3-dehydroquinate synthase, found in Shigella dysenteriae serotype 1 (strain Sd197).